The primary structure comprises 391 residues: MDNVGCEASSSRDPKGKKAVGFSPKLRVDKDCARWGNENVEEQTIGTQPTWRNHQHQTSRIRGFICATIIFVVCLGALSYIYRVDVSTTMLSTNQMNESHTAQCKNPPTRREWRGLTTGEKQEFTRSVNCLSRVPSKWGLNGTLYDDFSALHGGIGSWSHRSSSFLPWHRNALYVWEAALREHCGFNGQIPYWDWTMDWMNLANSSIWDSTEGFGGDGEVGGPITVGEGRCVVDGPFTDLRPIKYNHTYVQHCLSRGFRDNGTLGHMSGLPFRPEIIGEVRRKETFVDFEAAVEMHLHNAMHLAISGDFLALTAANDPIFYVHHAQMDHLWWQWQQENRERRLFEYNGKHMHNSTGHDASLDSMLVYGGFTEDIPVSEVMDTEKGKLCYRY.

Positions 1-21 are disordered; that stretch reads MDNVGCEASSSRDPKGKKAVG. Residues 61–81 form a helical membrane-spanning segment; the sequence is IRGFICATIIFVVCLGALSYI. N-linked (GlcNAc...) asparagine glycosylation is found at Asn-97 and Asn-141. Positions 160 and 169 each coordinate Cu cation. Asn-204, Asn-246, and Asn-261 each carry an N-linked (GlcNAc...) asparagine glycan. His-298 and His-324 together coordinate Cu cation. Asn-353 carries N-linked (GlcNAc...) asparagine glycosylation.

It belongs to the tyrosinase family. The cofactor is Cu(2+).

The protein resides in the membrane. Its pathway is mycotoxin biosynthesis. Functionally, tyrosinase-like protein; part of the gene cluster that mediates the biosynthesis of the phomopsins, a group of hexapeptide mycotoxins which infects lupins and causes lupinosis disease in livestock. Within the pathway, phomQ2 is involved in the generation of the common 13-membered macrocycle, possibly by catalyzing the hydroxylation of Tyr. The pathway starts with the processing of the precursor phomA by several endopeptidases including kexin proteases as well as the cluster-specific S41 family peptidase phomP1 and the oligopeptidase phomG to produce 10 identical copies of the hexapeptide Tyr-Val-Ile-Pro-Ile-Asp. After being excised from the precursor peptide, the core peptides are cyclized and modified post-translationally by enzymes encoded within the gene cluster. The timing and order of proteolysis of the phomA precursor and PTMs are still unknown. Two tyrosinase-like enzymes, phomQ1 and phomQ2, catalyze the chlorination and hydroxylation of Tyr, respectively. PhomYb, is proposed to be involved in the construction of the macrocyclic structure. The other 4 ustYa family proteins may be involved in PTMs that generate the unique structure of phomopsin A. PhomYa is required for the hydroxylation of C-beta of Tyr. PhomYc, phomYd, and phomYe are responsible for the biosynthesis of 2,3-dehydroisoleucine (dIle), 2,3-dehydroaspartic acid (dAsp), and 3,4-dehydroproline (dPro), respectively. While dIle formation by phomYc is indispensable for the installation of dAsp by phomYd, the order of the other PTMs have not been elucidated yet. Most of the biosynthetic enzymes likely have broad substrate specificity, and thus, there might be a metabolic grid from a precursor to phomopsin A. The enzyme(s) responsible for the biosynthesis of 3,4-dehydrovaline (dVal) have also not been identified yet. Finally, phomM acts as an S-adenosylmethionine-dependent alpha-N-methyltransferase that catalyzes two successive N-methylation reactions, converting N-desmethyl-phomopsin A to phomopsin A and phomopsin A further to an N,N-dimethylated congener called phomopsin E. The protein is Tyrosinase-like protein phomQ2 of Diaporthe leptostromiformis (Lupinosis disease fungus).